Here is a 468-residue protein sequence, read N- to C-terminus: UDP-N-acetylmuramoyl-L-alanine--L-glutamate ligase (468 aa).

122-128 lines the ATP pocket; sequence GTKGKST.

The protein belongs to the MurCDEF family. MurD2 subfamily.

The protein resides in the cytoplasm. It carries out the reaction UDP-N-acetyl-alpha-D-muramoyl-L-alanine + L-glutamate + ATP = UDP-N-acetyl-alpha-D-muramoyl-L-alanyl-L-glutamate + ADP + phosphate + H(+). It functions in the pathway cell wall biogenesis; peptidoglycan biosynthesis. Cell wall formation. Catalyzes the addition of L-glutamate to the nucleotide precursor UDP-N-acetylmuramoyl-L-alanine. In Xanthomonas euvesicatoria pv. vesicatoria (strain 85-10) (Xanthomonas campestris pv. vesicatoria), this protein is UDP-N-acetylmuramoyl-L-alanine--L-glutamate ligase.